The sequence spans 486 residues: NADH-quinone oxidoreductase subunit N (486 aa).

A run of 14 helical transmembrane segments spans residues 14–34 (SIAP…LNFI), 45–65 (MLAI…SGIV), 77–97 (FAFI…PLTL), 105–125 (CSLA…EFMV), 130–150 (LIVI…LIAL), 163–183 (YFTM…IFYL), 203–223 (ILIA…LSLI), 237–257 (SEVM…IVAM), 268–288 (IAFI…LANI), 299–319 (MLAF…VIGT), 326–346 (LFLY…VLWF), 377–397 (FLMA…VFWG), 409–429 (GFIF…YYYL), and 459–479 (FIIT…KFWT).

It belongs to the complex I subunit 2 family. In terms of assembly, NDH-1 is composed of 14 different subunits. Subunits NuoA, H, J, K, L, M, N constitute the membrane sector of the complex.

It is found in the cell inner membrane. The catalysed reaction is a quinone + NADH + 5 H(+)(in) = a quinol + NAD(+) + 4 H(+)(out). NDH-1 shuttles electrons from NADH, via FMN and iron-sulfur (Fe-S) centers, to quinones in the respiratory chain. The immediate electron acceptor for the enzyme in this species is believed to be ubiquinone. Couples the redox reaction to proton translocation (for every two electrons transferred, four hydrogen ions are translocated across the cytoplasmic membrane), and thus conserves the redox energy in a proton gradient. The chain is NADH-quinone oxidoreductase subunit N from Campylobacter hominis (strain ATCC BAA-381 / DSM 21671 / CCUG 45161 / LMG 19568 / NCTC 13146 / CH001A).